The following is a 289-amino-acid chain: Phosphatidylglycerol--prolipoprotein diacylglyceryl transferase (289 aa).

Transmembrane regions (helical) follow at residues 17-37 (LAVRWYGLMYLLGFACFILLG), 57-77 (MLFYGVLGVIVGGRLGHIFFY), 89-109 (IFAVWQGGMSFHGGFLGVIAA), 121-141 (WLVVTDFIAPLVPLGLGAGRI), 174-194 (QLYEFALEGLAFFTLMWIYSA), 200-220 (GAVSGMFLIGYGVFRSFAEFF), and 235-255 (ISMGQWLSLPMILAGVIMLVW). An a 1,2-diacyl-sn-glycero-3-phospho-(1'-sn-glycerol)-binding site is contributed by Arg-140.

The protein belongs to the Lgt family.

The protein localises to the cell inner membrane. The enzyme catalyses L-cysteinyl-[prolipoprotein] + a 1,2-diacyl-sn-glycero-3-phospho-(1'-sn-glycerol) = an S-1,2-diacyl-sn-glyceryl-L-cysteinyl-[prolipoprotein] + sn-glycerol 1-phosphate + H(+). The protein operates within protein modification; lipoprotein biosynthesis (diacylglyceryl transfer). Functionally, catalyzes the transfer of the diacylglyceryl group from phosphatidylglycerol to the sulfhydryl group of the N-terminal cysteine of a prolipoprotein, the first step in the formation of mature lipoproteins. The sequence is that of Phosphatidylglycerol--prolipoprotein diacylglyceryl transferase from Nitrosospira multiformis (strain ATCC 25196 / NCIMB 11849 / C 71).